Reading from the N-terminus, the 311-residue chain is Glutaminase (311 aa).

The substrate site is built by S66, N116, E162, N169, Y193, Y245, and V263.

The protein belongs to the glutaminase family. In terms of assembly, homotetramer.

The enzyme catalyses L-glutamine + H2O = L-glutamate + NH4(+). The sequence is that of Glutaminase from Rhodopseudomonas palustris (strain TIE-1).